Here is a 663-residue protein sequence, read N- to C-terminus: DNA ligase 1 (663 aa).

Residues 28 to 32 (DKEYD) and 76 to 77 (SL) contribute to the NAD(+) site. Lysine 118 functions as the N6-AMP-lysine intermediate in the catalytic mechanism. The NAD(+) site is built by arginine 139, glutamate 173, and lysine 310. Zn(2+) is bound by residues cysteine 403, cysteine 406, cysteine 419, and cysteine 425. The BRCT domain occupies 583–663 (VSESVFNDKT…KFEELIESVK (81 aa)).

Belongs to the NAD-dependent DNA ligase family. LigA subfamily. Mg(2+) serves as cofactor. Requires Mn(2+) as cofactor.

The enzyme catalyses NAD(+) + (deoxyribonucleotide)n-3'-hydroxyl + 5'-phospho-(deoxyribonucleotide)m = (deoxyribonucleotide)n+m + AMP + beta-nicotinamide D-nucleotide.. DNA ligase that catalyzes the formation of phosphodiester linkages between 5'-phosphoryl and 3'-hydroxyl groups in double-stranded DNA using NAD as a coenzyme and as the energy source for the reaction. It is essential for DNA replication and repair of damaged DNA. This chain is DNA ligase 1, found in Clostridium acetobutylicum (strain ATCC 824 / DSM 792 / JCM 1419 / IAM 19013 / LMG 5710 / NBRC 13948 / NRRL B-527 / VKM B-1787 / 2291 / W).